Consider the following 559-residue polypeptide: D-2-hydroxyglutarate dehydrogenase, mitochondrial (559 aa).

Residues 1-78 (MMMQKLRRSG…GMLLQQYKCF (78 aa)) constitute a mitochondrion transit peptide. An FAD-binding PCMH-type domain is found at 130-309 (YKGSSKLMLL…TKVSILTQPK (180 aa)).

This sequence belongs to the FAD-binding oxidoreductase/transferase type 4 family. In terms of assembly, homodimer. Requires FAD as cofactor.

Its subcellular location is the mitochondrion. The enzyme catalyses (R)-2-hydroxyglutarate + A = 2-oxoglutarate + AH2. Functionally, catalyzes the oxidation of (R)-2-hydroxyglutarate to 2-oxoglutarate. May be involved in the catabolism of propionyl-CoA derived from beta-oxidation. Involved in degradation of lysine for the supply of carbon and electrons to the ETF/ETFQO complex during dark-induced sugar starvation. This chain is D-2-hydroxyglutarate dehydrogenase, mitochondrial (D2HGDH), found in Arabidopsis thaliana (Mouse-ear cress).